The primary structure comprises 206 residues: RNA pyrophosphohydrolase (206 aa).

A Nudix hydrolase domain is found at 6–150 (GYRPNVGIVI…KRDVYRKVMK (145 aa)). The short motif at 38–59 (GGINEGENIETAMYRELYEEVG) is the Nudix box element. Over residues 162-191 (KPETVEKPRVERTEKRDFQKRDNQKREFRK) the composition is skewed to basic and acidic residues. Residues 162–206 (KPETVEKPRVERTEKRDFQKRDNQKREFRKSARTWNNSHQKGKAQ) are disordered.

This sequence belongs to the Nudix hydrolase family. RppH subfamily. A divalent metal cation is required as a cofactor.

Its function is as follows. Accelerates the degradation of transcripts by removing pyrophosphate from the 5'-end of triphosphorylated RNA, leading to a more labile monophosphorylated state that can stimulate subsequent ribonuclease cleavage. This chain is RNA pyrophosphohydrolase, found in Actinobacillus pleuropneumoniae serotype 3 (strain JL03).